The following is a 410-amino-acid chain: Chlorobenzene dioxygenase, ferredoxin reductase component (410 aa).

Residue 4-35 (HVAIIGNGVAGFTTAQALRAEGFEGRISLIGN) coordinates FAD. 145 to 173 (RLVIAGGGLIGCEVATTARKLGLAVTILE) contacts NAD(+).

Belongs to the bacterial ring-hydroxylating dioxygenase ferredoxin reductase family. In terms of assembly, this dioxygenase system consists of four proteins: the two subunits of the oxygenase component (TecA1 and TecA2), a ferredoxin (TecA3) and a ferredoxin reductase (TecA4). It depends on FAD as a cofactor.

It catalyses the reaction 2 reduced [2Fe-2S]-[ferredoxin] + NAD(+) + H(+) = 2 oxidized [2Fe-2S]-[ferredoxin] + NADH. It functions in the pathway aromatic compound metabolism. Its function is as follows. Part of the chlorobenzene dioxygenase system that catalyzes the dihydroxylation of a range of aromatic compounds, including chlorinated benzenes and toluenes, and dinuclear aromatics such as biphenyl and dibenzo-p-dioxin. This chain is Chlorobenzene dioxygenase, ferredoxin reductase component, found in Cupriavidus sp. (strain PS12).